The chain runs to 901 residues: Valine--tRNA ligase (901 aa).

Residues 536–540 carry the 'KMSKS' region motif; sequence KLSKS. Residue lysine 539 coordinates ATP. Residues 831-901 adopt a coiled-coil conformation; it reads LEGLISFEKE…KLQGNLEVLS (71 aa).

It belongs to the class-I aminoacyl-tRNA synthetase family. ValS type 1 subfamily. As to quaternary structure, monomer.

Its subcellular location is the cytoplasm. It catalyses the reaction tRNA(Val) + L-valine + ATP = L-valyl-tRNA(Val) + AMP + diphosphate. Its function is as follows. Catalyzes the attachment of valine to tRNA(Val). As ValRS can inadvertently accommodate and process structurally similar amino acids such as threonine, to avoid such errors, it has a 'posttransfer' editing activity that hydrolyzes mischarged Thr-tRNA(Val) in a tRNA-dependent manner. This Chlorobaculum tepidum (strain ATCC 49652 / DSM 12025 / NBRC 103806 / TLS) (Chlorobium tepidum) protein is Valine--tRNA ligase.